We begin with the raw amino-acid sequence, 573 residues long: 2-succinyl-5-enolpyruvyl-6-hydroxy-3-cyclohexene-1-carboxylate synthase (573 aa).

This sequence belongs to the TPP enzyme family. MenD subfamily. In terms of assembly, homodimer. Requires Mg(2+) as cofactor. It depends on Mn(2+) as a cofactor. Thiamine diphosphate is required as a cofactor.

The enzyme catalyses isochorismate + 2-oxoglutarate + H(+) = 5-enolpyruvoyl-6-hydroxy-2-succinyl-cyclohex-3-ene-1-carboxylate + CO2. It participates in quinol/quinone metabolism; 1,4-dihydroxy-2-naphthoate biosynthesis; 1,4-dihydroxy-2-naphthoate from chorismate: step 2/7. It functions in the pathway quinol/quinone metabolism; menaquinone biosynthesis. Its function is as follows. Catalyzes the thiamine diphosphate-dependent decarboxylation of 2-oxoglutarate and the subsequent addition of the resulting succinic semialdehyde-thiamine pyrophosphate anion to isochorismate to yield 2-succinyl-5-enolpyruvyl-6-hydroxy-3-cyclohexene-1-carboxylate (SEPHCHC). In Shewanella sp. (strain ANA-3), this protein is 2-succinyl-5-enolpyruvyl-6-hydroxy-3-cyclohexene-1-carboxylate synthase.